We begin with the raw amino-acid sequence, 348 residues long: MSKQTLVLLYGGRSAEREVSVLSAESVMRAVNYDKFLVKTYFITQMGQFIKTQQFSEKPSESERLMTNETIELTQKIKPSDIYEEGAVVFPVLHGPMGEDGSIQGFLEVLRMPYIGTNVMSSSIAMDKITTKRVLESIGIPQVAYTVYIDGQDLEACLVETLARLTFPIFVKPANMGSSVGISKAQTKVELRKAIQLALTYDSRVLIEQGVVAREIEVGLLGNDKVKSTLPGEVIKDVDFYDYQAKYVDNKITMAIPADVDQSIVTEMRSYAEVAFKALGGCGLSRCDFFLTQDGQVYLNELNTMPGFTQWSMYPLLWENMGLAYPDLIEVLVTLAQEMFDQRESHLI.

Residues 132-334 form the ATP-grasp domain; the sequence is KRVLESIGIP…YPDLIEVLVT (203 aa). 162–217 is an ATP binding site; it reads LARLTFPIFVKPANMGSSVGISKAQTKVELRKAIQLALTYDSRVLIEQGVVAREIE. Residues Asp-288, Glu-301, and Asn-303 each coordinate Mg(2+).

The protein belongs to the D-alanine--D-alanine ligase family. Mg(2+) is required as a cofactor. The cofactor is Mn(2+).

Its subcellular location is the cytoplasm. The catalysed reaction is 2 D-alanine + ATP = D-alanyl-D-alanine + ADP + phosphate + H(+). It participates in cell wall biogenesis; peptidoglycan biosynthesis. Cell wall formation. The chain is D-alanine--D-alanine ligase from Streptococcus pyogenes serotype M2 (strain MGAS10270).